The primary structure comprises 229 residues: Large ribosomal subunit protein uL1 (229 aa).

The protein belongs to the universal ribosomal protein uL1 family. As to quaternary structure, part of the 50S ribosomal subunit.

Its function is as follows. Binds directly to 23S rRNA. The L1 stalk is quite mobile in the ribosome, and is involved in E site tRNA release. In terms of biological role, protein L1 is also a translational repressor protein, it controls the translation of the L11 operon by binding to its mRNA. The protein is Large ribosomal subunit protein uL1 of Clostridium botulinum (strain Loch Maree / Type A3).